The following is a 433-amino-acid chain: Tol-Pal system protein TolB (433 aa).

Positions 1 to 21 (MIKRLRGLLVMLCCVAGMAVA) are cleaved as a signal peptide.

This sequence belongs to the TolB family. As to quaternary structure, the Tol-Pal system is composed of five core proteins: the inner membrane proteins TolA, TolQ and TolR, the periplasmic protein TolB and the outer membrane protein Pal. They form a network linking the inner and outer membranes and the peptidoglycan layer.

The protein resides in the periplasm. In terms of biological role, part of the Tol-Pal system, which plays a role in outer membrane invagination during cell division and is important for maintaining outer membrane integrity. This Pseudomonas putida (strain ATCC 47054 / DSM 6125 / CFBP 8728 / NCIMB 11950 / KT2440) protein is Tol-Pal system protein TolB.